Consider the following 37-residue polypeptide: Cytochrome b6-f complex subunit 5 (37 aa).

The helical transmembrane segment at 5 to 25 (LLSGIVPGLIPITLAGSFVIA) threads the bilayer.

This sequence belongs to the PetG family. As to quaternary structure, the 4 large subunits of the cytochrome b6-f complex are cytochrome b6, subunit IV (17 kDa polypeptide, PetD), cytochrome f and the Rieske protein, while the 4 small subunits are PetG, PetL, PetM and PetN. The complex functions as a dimer.

Its subcellular location is the plastid membrane. Component of the cytochrome b6-f complex, which mediates electron transfer between photosystem II (PSII) and photosystem I (PSI), cyclic electron flow around PSI, and state transitions. PetG is required for either the stability or assembly of the cytochrome b6-f complex. In Aneura mirabilis (Parasitic liverwort), this protein is Cytochrome b6-f complex subunit 5.